The primary structure comprises 619 residues: MFVRSNILRALIFTVLEKTCLEIKMMHSSCKGLVLLLFLFVVVFIGNTDANAQWEVSHKVRASPHENMGRNVIDGSGVEKTLHDIGMGEKRGTHNKVSVSTVALFTLAMAAATGLGAVPFFFVELDPQWAGICNGMAAGVMLAASFDLVKEGQEHGSGNWVVTGILAGALFIWLCKQILEQYGEVSMLDIKGADATKVVLVIGIMTLHSFGEGSGVGVSFAGSKGFSQGLLVTLAIAVHNIPEGLAVSMVLASRGVSPQNAMLWSIITSLPQPLVAVPAFLCADAFSKFLPFCTGFAAGCMIWMVIAEVLPDAFKEASPSQVASAATISVASMEALSTLFESFTHDYNSEDASGFFVSLLFGLGPLLGGVFLVASAVTFRLQHALLMGVASGIAFVLGLWRPLQLLLSAKMGLIPLVSLLAIGAGLSHFTSSTILNVTGRKKSRAGSLINPVTNFPTSVITLQSLLACGAVGFHALAEGLALGVAAPNAYGLGRHMVLPVSLHGLPRGTAVASCVFGATDSWHAALAAAALIGFVGPISAIGSILAGIDYSGLDHVMVVACGGLLPSFWQVIKRAVRLERRKGSVGMVLGLACAVVCLTFTRLVCLHTPYCNSAPEAVR.

The next 15 helical transmembrane spans lie at 25–45 (MMHS…VVFI), 102–122 (VALF…PFFF), 129–149 (WAGI…FDLV), 155–175 (HGSG…IWLC), 198–218 (VVLV…GVGV), 230–250 (LLVT…VSMV), 261–281 (AMLW…PAFL), 289–309 (FLPF…IAEV), 354–374 (GFFV…FLVA), 383–403 (HALL…WRPL), 405–425 (LLLS…IGAG), 465–485 (LLAC…LGVA), 528–548 (AAAL…LAGI), 552–572 (GLDH…WQVI), and 585–605 (VGMV…RLVC).

The protein belongs to the ZIP transporter (TC 2.A.5) family. ZupT subfamily.

Its subcellular location is the membrane. Functionally, may transport zinc. The polypeptide is Putative zinc transporter At3g08650 (Arabidopsis thaliana (Mouse-ear cress)).